Consider the following 294-residue polypeptide: 4-hydroxy-tetrahydrodipicolinate synthase (294 aa).

T44 contributes to the pyruvate binding site. The Proton donor/acceptor role is filled by Y132. K161 serves as the catalytic Schiff-base intermediate with substrate. Position 203 (I203) interacts with pyruvate.

This sequence belongs to the DapA family. Homotetramer; dimer of dimers.

Its subcellular location is the cytoplasm. It carries out the reaction L-aspartate 4-semialdehyde + pyruvate = (2S,4S)-4-hydroxy-2,3,4,5-tetrahydrodipicolinate + H2O + H(+). It functions in the pathway amino-acid biosynthesis; L-lysine biosynthesis via DAP pathway; (S)-tetrahydrodipicolinate from L-aspartate: step 3/4. Catalyzes the condensation of (S)-aspartate-beta-semialdehyde [(S)-ASA] and pyruvate to 4-hydroxy-tetrahydrodipicolinate (HTPA). This Aquifex aeolicus (strain VF5) protein is 4-hydroxy-tetrahydrodipicolinate synthase.